The primary structure comprises 408 residues: 3-phosphoshikimate 1-carboxyvinyltransferase (408 aa).

The 3-phosphoshikimate site is built by lysine 10, serine 11, and arginine 15. A phosphoenolpyruvate-binding site is contributed by lysine 10. Phosphoenolpyruvate-binding residues include glycine 79 and arginine 107. 3-phosphoshikimate is bound by residues serine 150, serine 151, glutamine 152, serine 179, glutamate 297, and histidine 324. Glutamine 152 is a phosphoenolpyruvate binding site. Glutamate 297 serves as the catalytic Proton acceptor. Residues arginine 328, arginine 369, and lysine 394 each contribute to the phosphoenolpyruvate site.

This sequence belongs to the EPSP synthase family. As to quaternary structure, monomer.

The protein resides in the cytoplasm. It carries out the reaction 3-phosphoshikimate + phosphoenolpyruvate = 5-O-(1-carboxyvinyl)-3-phosphoshikimate + phosphate. It participates in metabolic intermediate biosynthesis; chorismate biosynthesis; chorismate from D-erythrose 4-phosphate and phosphoenolpyruvate: step 6/7. Its function is as follows. Catalyzes the transfer of the enolpyruvyl moiety of phosphoenolpyruvate (PEP) to the 5-hydroxyl of shikimate-3-phosphate (S3P) to produce enolpyruvyl shikimate-3-phosphate and inorganic phosphate. This chain is 3-phosphoshikimate 1-carboxyvinyltransferase, found in Corynebacterium efficiens (strain DSM 44549 / YS-314 / AJ 12310 / JCM 11189 / NBRC 100395).